A 181-amino-acid chain; its full sequence is UPF0397 protein str0306 (181 aa).

A run of 5 helical transmembrane segments spans residues 11-31, 45-65, 72-92, 109-129, and 147-167; these read ATGI…IPIF, LFSV…GHAL, GNIS…IGLF, IWFN…VTPI, and FVAG…LLAI.

This sequence belongs to the UPF0397 family.

The protein localises to the cell membrane. This is UPF0397 protein str0306 from Streptococcus thermophilus (strain CNRZ 1066).